The following is a 343-amino-acid chain: tRNA N6-adenosine threonylcarbamoyltransferase (343 aa).

Positions 112 and 116 each coordinate Fe cation. Substrate-binding positions include 135–139 (LVSGG), Asp-168, Gly-181, and Asn-273. Asp-301 is a binding site for Fe cation.

It belongs to the KAE1 / TsaD family. Fe(2+) is required as a cofactor.

It is found in the cytoplasm. It carries out the reaction L-threonylcarbamoyladenylate + adenosine(37) in tRNA = N(6)-L-threonylcarbamoyladenosine(37) in tRNA + AMP + H(+). Its function is as follows. Required for the formation of a threonylcarbamoyl group on adenosine at position 37 (t(6)A37) in tRNAs that read codons beginning with adenine. Is involved in the transfer of the threonylcarbamoyl moiety of threonylcarbamoyl-AMP (TC-AMP) to the N6 group of A37, together with TsaE and TsaB. TsaD likely plays a direct catalytic role in this reaction. The sequence is that of tRNA N6-adenosine threonylcarbamoyltransferase from Azoarcus sp. (strain BH72).